The following is a 230-amino-acid chain: Thioredoxin domain-containing protein PLP3A (230 aa).

Positions 89–173 (VSEGDFLGEV…GVAMDRLVGF (85 aa)) constitute a Thioredoxin domain. Positions 197–230 (LSKKKKEEDDEDAEYQESIRRSVRSSENLDSDSD) are disordered.

This sequence belongs to the phosducin family. As to quaternary structure, interacts with TUBB2, TUBB3, TUBB4 and TUBB5. In terms of tissue distribution, expressed in embryos, shoot meristems, leaf primordia, root meristems, floral meristems and young floral buds.

The protein localises to the cytoplasm. It is found in the nucleus. Tubulin-binding protein involved in microtubule formation. The protein is Thioredoxin domain-containing protein PLP3A (PLP3A) of Arabidopsis thaliana (Mouse-ear cress).